The sequence spans 37 residues: Large ribosomal subunit protein bL36c (37 aa).

It belongs to the bacterial ribosomal protein bL36 family.

The protein resides in the plastid. Its subcellular location is the chloroplast. The chain is Large ribosomal subunit protein bL36c (rpl36) from Pisum sativum (Garden pea).